The primary structure comprises 480 residues: Ribulose bisphosphate carboxylase large chain (480 aa).

The propeptide occupies 1-2 (MS). Residue P3 is modified to N-acetylproline. K14 bears the N6,N6,N6-trimethyllysine mark. Substrate is bound by residues N123 and T173. Residue K175 is the Proton acceptor of the active site. K177 contributes to the substrate binding site. Mg(2+)-binding residues include K201, D203, and E204. The residue at position 201 (K201) is an N6-carboxylysine. H294 acts as the Proton acceptor in catalysis. 3 residues coordinate substrate: R295, H327, and S379.

This sequence belongs to the RuBisCO large chain family. Type I subfamily. As to quaternary structure, heterohexadecamer of 8 large chains and 8 small chains; disulfide-linked. The disulfide link is formed within the large subunit homodimers. Mg(2+) serves as cofactor. In terms of processing, the disulfide bond which can form in the large chain dimeric partners within the hexadecamer appears to be associated with oxidative stress and protein turnover.

It localises to the plastid. Its subcellular location is the chloroplast. It catalyses the reaction 2 (2R)-3-phosphoglycerate + 2 H(+) = D-ribulose 1,5-bisphosphate + CO2 + H2O. It carries out the reaction D-ribulose 1,5-bisphosphate + O2 = 2-phosphoglycolate + (2R)-3-phosphoglycerate + 2 H(+). Functionally, ruBisCO catalyzes two reactions: the carboxylation of D-ribulose 1,5-bisphosphate, the primary event in carbon dioxide fixation, as well as the oxidative fragmentation of the pentose substrate in the photorespiration process. Both reactions occur simultaneously and in competition at the same active site. The polypeptide is Ribulose bisphosphate carboxylase large chain (Mollugo verticillata (Green carpetweed)).